An 87-amino-acid chain; its full sequence is Kappa-6-bungarotoxin (87 aa).

Positions 1-21 (MKTLLLSLVVVTIVCLDLGYT) are cleaved as a signal peptide. Disulfide bonds link Cys-24/Cys-42, Cys-35/Cys-63, Cys-48/Cys-52, Cys-67/Cys-79, and Cys-80/Cys-85.

Belongs to the three-finger toxin family. Long-chain subfamily. Kappa-neurotoxin sub-subfamily. As to quaternary structure, homo- and heterodimer; non-covalently linked. In terms of tissue distribution, expressed by the venom gland.

It localises to the secreted. Its function is as follows. Postsynaptic neurotoxin that binds and inhibits neuronal nicotinic acetylcholine receptors (nAChR) with high affinity (IC(50)&lt;100 nM). Is a selective, and slowly reversible antagonist of alpha-3/CHRNA3-containing and some alpha-4/CHRNA4-containing AChRs. The protein is Kappa-6-bungarotoxin of Bungarus multicinctus (Many-banded krait).